The chain runs to 106 residues: Large ribosomal subunit protein uL24 (106 aa).

This sequence belongs to the universal ribosomal protein uL24 family. As to quaternary structure, part of the 50S ribosomal subunit.

Functionally, one of two assembly initiator proteins, it binds directly to the 5'-end of the 23S rRNA, where it nucleates assembly of the 50S subunit. One of the proteins that surrounds the polypeptide exit tunnel on the outside of the subunit. The protein is Large ribosomal subunit protein uL24 of Syntrophus aciditrophicus (strain SB).